Consider the following 400-residue polypeptide: NADH-ubiquinone oxidoreductase 49 kDa subunit (400 aa).

This sequence belongs to the complex I 49 kDa subunit family.

Its subcellular location is the mitochondrion. The enzyme catalyses a ubiquinone + NADH + 5 H(+)(in) = a ubiquinol + NAD(+) + 4 H(+)(out). Functionally, core subunit of the mitochondrial membrane respiratory chain NADH dehydrogenase (Complex I) that is believed to belong to the minimal assembly required for catalysis. Complex I functions in the transfer of electrons from NADH to the respiratory chain. The immediate electron acceptor for the enzyme is believed to be ubiquinone. Component of the iron-sulfur (IP) fragment of the enzyme. Component of the iron-sulfur (IP) fragment of the enzyme. In Paramecium tetraurelia, this protein is NADH-ubiquinone oxidoreductase 49 kDa subunit (NAD7).